A 136-amino-acid chain; its full sequence is Riboflavin kinase (136 aa).

Residue 15-20 (GLGEGR) participates in CDP binding. Mg(2+) is bound by residues threonine 44 and asparagine 46. Residues threonine 103 and glutamate 111 each coordinate FMN. Residue 116–119 (YYLR) coordinates CDP.

Belongs to the archaeal riboflavin kinase family. Mg(2+) serves as cofactor.

It catalyses the reaction riboflavin + CTP = CDP + FMN + H(+). Its pathway is cofactor biosynthesis; FMN biosynthesis; FMN from riboflavin (CTP route): step 1/1. Functionally, catalyzes the CTP-dependent phosphorylation of riboflavin (vitamin B2) to form flavin mononucleotide (FMN). This chain is Riboflavin kinase, found in Sulfurisphaera tokodaii (strain DSM 16993 / JCM 10545 / NBRC 100140 / 7) (Sulfolobus tokodaii).